A 111-amino-acid chain; its full sequence is Auxin-repressed 12.5 kDa protein (111 aa).

The disordered stretch occupies residues E18–R111. Residues T43–P57 are compositionally biased toward low complexity. Residues S74–T95 show a composition bias toward polar residues.

The protein belongs to the DRM1/ARP family.

This Fragaria ananassa (Strawberry) protein is Auxin-repressed 12.5 kDa protein.